Reading from the N-terminus, the 600-residue chain is Elongation factor 4 (600 aa).

A tr-type G domain is found at 5–187 (KYIRNFSIIA…AIINKLPAPK (183 aa)). GTP contacts are provided by residues 17-22 (DHGKST) and 134-137 (NKID).

The protein belongs to the TRAFAC class translation factor GTPase superfamily. Classic translation factor GTPase family. LepA subfamily.

Its subcellular location is the cell inner membrane. The catalysed reaction is GTP + H2O = GDP + phosphate + H(+). Functionally, required for accurate and efficient protein synthesis under certain stress conditions. May act as a fidelity factor of the translation reaction, by catalyzing a one-codon backward translocation of tRNAs on improperly translocated ribosomes. Back-translocation proceeds from a post-translocation (POST) complex to a pre-translocation (PRE) complex, thus giving elongation factor G a second chance to translocate the tRNAs correctly. Binds to ribosomes in a GTP-dependent manner. The protein is Elongation factor 4 of Rickettsia prowazekii (strain Madrid E).